Consider the following 248-residue polypeptide: Gas vesicle protein J (248 aa).

One copy of the 1; truncated repeat lies at 121-140 (DVKDDLYQTSAKIPSPVDTP). The segment at 121–245 (DVKDDLYQTS…EEIPSSVDPA (125 aa)) is 6 X 21 AA approximate tandem repeats. 5 consecutive repeat copies span residues 141 to 161 (IEVLDFQAQSSGGTPPYVNTS), 162 to 182 (MEILDFQAQTSAESSSPVGST), 183 to 203 (VEILDFQAQTSEESSSPVVST), 204 to 224 (VEILDFQAQTSEESSSPVGST), and 225 to 245 (VEILDFQAQTSEEIPSSVDPA).

Belongs to the gas vesicle GvpA family. In terms of assembly, interacts with GvpA.

The protein resides in the gas vesicle. Functionally, a minor component of the gas vesicle, might be involved in nucleating gas vesicle formation. Gas vesicles (GV) are hollow, gas filled proteinaceous nanostructures. During planktonic growth they allow positioning of the organism at a favorable depth for light or nutrient acquisition. This is Gas vesicle protein J from Dolichospermum flosaquae (Anabaena flos-aquae).